The chain runs to 64 residues: uncharacterized protein (64 aa).

This is an uncharacterized protein from Escherichia coli (strain K12).